The following is a 1854-amino-acid chain: Calcium-channel protein cch1 (1854 aa).

Low complexity predominate over residues 1–15 (MSSSSNSDPSSSPDN). Residues 1–33 (MSSSSNSDPSSSPDNTDFIPLKDNPKDTSSYIN) are disordered. Asparagine 40 carries N-linked (GlcNAc...) asparagine glycosylation. A run of 3 helical transmembrane segments spans residues 184–204 (HPLY…LLMI), 220–240 (IIVI…LFGF), and 274–294 (DFVA…QGIF). N-linked (GlcNAc...) asparagine glycosylation occurs at asparagine 310. The next 8 membrane-spanning stretches (helical) occupy residues 328 to 348 (PLVQ…ILGV), 427 to 447 (FFNS…TDIM), 461 to 481 (LFII…IAVV), 514 to 534 (YLFY…VTLC), 549 to 569 (LIFY…RFFA), 581 to 601 (YTNL…LPSI), 606 to 626 (VAFG…ILLI), and 642 to 662 (QLLN…LCAV). N-linked (GlcNAc...) asparagine glycosylation is present at asparagine 699. Residues 723–743 (FFTLWFLFSNNVVLSMFIAVI) form a helical membrane-spanning segment. A glycan (N-linked (GlcNAc...) asparagine) is linked at asparagine 786. The next 3 membrane-spanning stretches (helical) occupy residues 946-966 (VFIY…TPIY), 980-1000 (FVWT…IKII), and 1021-1041 (FFVL…HALL). A glycan (N-linked (GlcNAc...) asparagine) is linked at asparagine 1058. 2 helical membrane-spanning segments follow: residues 1075-1095 (FFKI…FALW) and 1148-1168 (FPHA…VDIM). Asparagine 1184 carries N-linked (GlcNAc...) asparagine glycosylation. Transmembrane regions (helical) follow at residues 1193 to 1213 (FVLF…AIII), 1274 to 1294 (FTGL…PCPI), 1302 to 1322 (SIFL…VYGL), and 1331 to 1351 (FWNM…IAIL). N-linked (GlcNAc...) asparagine glycosylation occurs at asparagine 1356. Helical transmembrane passes span 1358-1378 (SLTL…IPKF), 1393-1413 (PSIF…AIAF), and 1486-1506 (FIAW…TVVF). 2 N-linked (GlcNAc...) asparagine glycosylation sites follow: asparagine 1508 and asparagine 1773. The interval 1764-1792 (TIASGEGDDNHSVEDHLKVPTDNEPRRSP) is disordered. A compositionally biased stretch (basic and acidic residues) spans 1771–1790 (DDNHSVEDHLKVPTDNEPRR).

Belongs to the calcium channel alpha-1 subunit (TC 1.A.1.11) family. In terms of assembly, interacts with yam8 to form a Ca(2+) influx channel.

The protein localises to the cell membrane. In terms of biological role, voltage-gated, high-affinity calcium channel that functions together with yam8 to mediate calcium entry into cells. Required during conditions of environmental stress. In Schizosaccharomyces pombe (strain 972 / ATCC 24843) (Fission yeast), this protein is Calcium-channel protein cch1 (cch1).